Consider the following 476-residue polypeptide: Aspartyl/glutamyl-tRNA(Asn/Gln) amidotransferase subunit B (476 aa).

This sequence belongs to the GatB/GatE family. GatB subfamily. In terms of assembly, heterotrimer of A, B and C subunits.

It carries out the reaction L-glutamyl-tRNA(Gln) + L-glutamine + ATP + H2O = L-glutaminyl-tRNA(Gln) + L-glutamate + ADP + phosphate + H(+). It catalyses the reaction L-aspartyl-tRNA(Asn) + L-glutamine + ATP + H2O = L-asparaginyl-tRNA(Asn) + L-glutamate + ADP + phosphate + 2 H(+). Its function is as follows. Allows the formation of correctly charged Asn-tRNA(Asn) or Gln-tRNA(Gln) through the transamidation of misacylated Asp-tRNA(Asn) or Glu-tRNA(Gln) in organisms which lack either or both of asparaginyl-tRNA or glutaminyl-tRNA synthetases. The reaction takes place in the presence of glutamine and ATP through an activated phospho-Asp-tRNA(Asn) or phospho-Glu-tRNA(Gln). This is Aspartyl/glutamyl-tRNA(Asn/Gln) amidotransferase subunit B from Neisseria meningitidis serogroup B (strain ATCC BAA-335 / MC58).